The primary structure comprises 564 residues: Poly(U)-binding-splicing factor PUF60 (564 aa).

The interval 1 to 521 is inhibits homodimerization; the sequence is MATATIALQV…EDAEIIVKIF (521 aa). Residues 37 to 61 are disordered; sequence KWKPPQGTESIKMENGQSTGTKLGL. Lys48 is covalently cross-linked (Glycyl lysine isopeptide (Lys-Gly) (interchain with G-Cter in SUMO2)). Thr65 carries the phosphothreonine modification. The interval 82–564 is inhibits transcriptional repression, interaction with ERCC3 and apoptosis induction; it reads QSIKSVLVKQ…ERFDNSDLSA (483 aa). Lys85 participates in a covalent cross-link: Glycyl lysine isopeptide (Lys-Gly) (interchain with G-Cter in SUMO2). The residue at position 117 (Ser117) is a Phosphoserine. 2 consecutive RRM domains span residues 134–212 and 231–309; these read CRVY…RPSN and NRIY…KAVT. At Ser249 the chain carries Phosphoserine. At Lys256 the chain carries N6-acetyllysine. At Thr319 the chain carries Phosphothreonine. The interval 421-442 is disordered; sequence KKEKEEEELFPESERPEMLSEQ. Residue Lys424 forms a Glycyl lysine isopeptide (Lys-Gly) (interchain with G-Cter in SUMO2) linkage. Basic and acidic residues predominate over residues 432–442; it reads ESERPEMLSEQ. Position 459 is an N6-acetyllysine (Lys459). Lys463 is covalently cross-linked (Glycyl lysine isopeptide (Lys-Gly) (interchain with G-Cter in SUMO2)). The RRM 3; atypical domain maps to 467 to 554; it reads TVMVLRNMVD…RKVVAEVYDQ (88 aa).

This sequence belongs to the RRM half pint family. Homodimer. Associates with the spliceosome. Found in a complex with RO60 and Y5 RNA. Found in a complex with FUBP1 and far upstream element (FUSE) DNA segment. Interacts directly with ERCC3. Interacts with CDK7 and GTF2H1. Interacts with SRSF11/P54. Interacts with ARGLU1; interaction may be involved in ARGLU1-mediated modulation of alternative splicing.

It is found in the nucleus. Functionally, DNA- and RNA-binding protein, involved in several nuclear processes such as pre-mRNA splicing, apoptosis and transcription regulation. In association with FUBP1 regulates MYC transcription at the P2 promoter through the core-TFIIH basal transcription factor. Acts as a transcriptional repressor through the core-TFIIH basal transcription factor. Represses FUBP1-induced transcriptional activation but not basal transcription. Decreases ERCC3 helicase activity. Is also involved in pre-mRNA splicing. Promotes splicing of an intron with weak 3'-splice site and pyrimidine tract in a cooperative manner with U2AF2. Involved in apoptosis induction when overexpressed in HeLa cells. Modulates alternative splicing of several mRNAs. Binds to relaxed DNA of active promoter regions. Binds to the pyrimidine tract and 3'-splice site regions of pre-mRNA; binding is enhanced in presence of U2AF2. Binds to Y5 RNA in association with RO60. Binds to poly(U) RNA. This chain is Poly(U)-binding-splicing factor PUF60, found in Rattus norvegicus (Rat).